Consider the following 198-residue polypeptide: Remorin (198 aa).

A compositionally biased stretch (basic and acidic residues) spans 1–11 (MAELEAKKVEI). The interval 1-24 (MAELEAKKVEIVDPAPPAPGPVEA) is disordered. Residues 97–184 (EESEKSKAEN…LKAEELAAKY (88 aa)) are a coiled coil.

The protein belongs to the remorin family. In terms of processing, the N-terminus is blocked. Post-translationally, phosphorylated.

It localises to the cell membrane. In terms of biological role, binds to both simple and complex galacturonides. May be involved in cell-to-cell signaling and molecular transport. This is Remorin from Solanum tuberosum (Potato).